Consider the following 24-residue polypeptide: Defensin D5 (24 aa).

The protein belongs to the DEFL family. Group IV subfamily. As to expression, distributed in the epidermal cell layer of leaves and in the subepidermal layer region of stems. Not in roots.

The protein resides in the secreted. It is found in the cell wall. Functionally, antimicrobial peptide. Active against Fusarium spp., Gram-positive and Gram-negative bacterial pathogens. This is Defensin D5 from Spinacia oleracea (Spinach).